Reading from the N-terminus, the 351-residue chain is UDP-3-O-acylglucosamine N-acyltransferase (351 aa).

The Proton acceptor role is filled by His-257.

This sequence belongs to the transferase hexapeptide repeat family. LpxD subfamily. In terms of assembly, homotrimer.

The catalysed reaction is a UDP-3-O-[(3R)-3-hydroxyacyl]-alpha-D-glucosamine + a (3R)-hydroxyacyl-[ACP] = a UDP-2-N,3-O-bis[(3R)-3-hydroxyacyl]-alpha-D-glucosamine + holo-[ACP] + H(+). The protein operates within bacterial outer membrane biogenesis; LPS lipid A biosynthesis. Its function is as follows. Catalyzes the N-acylation of UDP-3-O-acylglucosamine using 3-hydroxyacyl-ACP as the acyl donor. Is involved in the biosynthesis of lipid A, a phosphorylated glycolipid that anchors the lipopolysaccharide to the outer membrane of the cell. This chain is UDP-3-O-acylglucosamine N-acyltransferase, found in Methylorubrum extorquens (strain CM4 / NCIMB 13688) (Methylobacterium extorquens).